Consider the following 89-residue polypeptide: UPF0237 protein LMOf2365_0562 (89 aa).

An ACT domain is found at 4–78 (VLTVIGKDNV…EDLQVKIHIQ (75 aa)).

This sequence belongs to the UPF0237 family.

In Listeria monocytogenes serotype 4b (strain F2365), this protein is UPF0237 protein LMOf2365_0562.